A 511-amino-acid chain; its full sequence is Glutamyl-tRNA(Gln) amidotransferase subunit B, mitochondrial (511 aa).

The N-terminal 6 residues, 1–6 (MLRRYL), are a transit peptide targeting the mitochondrion.

It belongs to the GatB/GatE family. GatB subfamily. In terms of assembly, subunit of the heterotrimeric GatFAB amidotransferase (AdT) complex, composed of A, B and F subunits.

It is found in the mitochondrion. It catalyses the reaction L-glutamyl-tRNA(Gln) + L-glutamine + ATP + H2O = L-glutaminyl-tRNA(Gln) + L-glutamate + ADP + phosphate + H(+). In terms of biological role, allows the formation of correctly charged Gln-tRNA(Gln) through the transamidation of misacylated Glu-tRNA(Gln) in the mitochondria. The reaction takes place in the presence of glutamine and ATP through an activated gamma-phospho-Glu-tRNA(Gln). This Lodderomyces elongisporus (strain ATCC 11503 / CBS 2605 / JCM 1781 / NBRC 1676 / NRRL YB-4239) (Yeast) protein is Glutamyl-tRNA(Gln) amidotransferase subunit B, mitochondrial.